The following is a 353-amino-acid chain: Trans-enoyl reductase eqxC (353 aa).

An NADP(+)-binding site is contributed by 45–48 (VDTK). A substrate-binding site is contributed by 131–138 (ISFMTTGL). Residues 166-169 (SSAT), 189-192 (SPRN), tyrosine 207, and 254-255 (LE) contribute to the NADP(+) site. A substrate-binding site is contributed by 275–279 (GPQML). 344–345 (IS) contacts NADP(+).

It belongs to the zinc-containing alcohol dehydrogenase family. As to quaternary structure, monomer.

It catalyses the reaction L-serine + 7 malonyl-CoA + acetyl-CoA + 2 S-adenosyl-L-methionine + ATP + 8 NADPH + 11 H(+) = (5S)-3-[(2E,6R,8E,10E,12E)-2,6-dimethyltetradeca-2,8,10,12-tetraenoyl]-5-(hydroxymethyl)pyrrolidine-2,4-dione + AMP + 2 S-adenosyl-L-homocysteine + 7 CO2 + diphosphate + 8 NADP(+) + 8 CoA + 6 H2O. Its pathway is mycotoxin biosynthesis. Trans-enoyl reductase; part of the gene cluster that mediates the biosynthesis of equisetin, a trans-fused decalin-containing tetramic acid with antimicrobial activity. The PKS module of eqxS together with the enoylreductase eqxC catalyze the formation of the polyketide unit which is then conjugated to L-serine by the condensation domain of the eqxS NRPS module. Activity of the Dieckmann cyclase domain (RED) results in release of the Dieckmann product intermediate. Diels-Alderase eqx3 is involved in endo-selective Diels-Alder cycloaddition to form the decalin ring, leading to the production of N-desmethylequisetin also called trichosetin. Subsequent N-methylation is carried out by eqxD to give equisetin. The sequence is that of Trans-enoyl reductase eqxC from Fusarium heterosporum.